Consider the following 146-residue polypeptide: Large ribosomal subunit protein uL11 (146 aa).

It belongs to the universal ribosomal protein uL11 family. Part of the ribosomal stalk of the 50S ribosomal subunit. Interacts with L10 and the large rRNA to form the base of the stalk. L10 forms an elongated spine to which L12 dimers bind in a sequential fashion forming a multimeric L10(L12)X complex. In terms of processing, one or more lysine residues are methylated.

In terms of biological role, forms part of the ribosomal stalk which helps the ribosome interact with GTP-bound translation factors. This is Large ribosomal subunit protein uL11 from Corynebacterium kroppenstedtii (strain DSM 44385 / JCM 11950 / CIP 105744 / CCUG 35717).